Consider the following 256-residue polypeptide: Spore coat polysaccharide biosynthesis protein SpsA (256 aa).

The cysteines at positions 155 and 243 are disulfide-linked. Residue Asp-191 is part of the active site.

This sequence belongs to the glycosyltransferase 2 family. In terms of assembly, monomer in solution.

It participates in spore coat biogenesis; spore coat polysaccharide biosynthesis. Functionally, glycosyltransferase implicated in the synthesis of the spore coat. The polypeptide is Spore coat polysaccharide biosynthesis protein SpsA (spsA) (Bacillus subtilis (strain 168)).